The chain runs to 90 residues: Small ribosomal subunit protein bS20 (90 aa).

The segment covering 1-10 (MANHKSTQKS) has biased composition (polar residues). Residues 1–25 (MANHKSTQKSIRQDQKRNLINKSRK) form a disordered region.

Belongs to the bacterial ribosomal protein bS20 family.

In terms of biological role, binds directly to 16S ribosomal RNA. The protein is Small ribosomal subunit protein bS20 of Orientia tsutsugamushi (strain Boryong) (Rickettsia tsutsugamushi).